The sequence spans 204 residues: COBRA-like protein 5 (204 aa).

A signal peptide spans Met1–Ala24. 2 N-linked (GlcNAc...) asparagine glycosylation sites follow: Asn31 and Asn195.

Belongs to the COBRA family. In terms of tissue distribution, expressed in roots, stems, leaves, flowers and siliques.

This chain is COBRA-like protein 5 (COBL5), found in Arabidopsis thaliana (Mouse-ear cress).